The chain runs to 78 residues: Large ribosomal subunit protein bL28 (78 aa).

This sequence belongs to the bacterial ribosomal protein bL28 family.

This is Large ribosomal subunit protein bL28 from Prochlorococcus marinus (strain MIT 9211).